The following is a 287-amino-acid chain: Transmembrane protein 71 (287 aa).

The interval 1–25 is disordered; the sequence is MYRDSPLMSTPVANDSRSDEGPSGK. Helical transmembrane passes span 218–238 and 244–264; these read AGLMHKVSFQAILLAVCLVIS and FVGGELASIFTCALLITIAYV.

The protein belongs to the TMEM71 family.

It is found in the membrane. The chain is Transmembrane protein 71 (Tmem71) from Mus musculus (Mouse).